A 69-amino-acid chain; its full sequence is MKNKSKYREMSYKELVSKRNDLKQKYMDLRFQAVVGHLDNPLEKRSMRREIAMLNTFIRQKELAGEGAN.

The protein belongs to the universal ribosomal protein uL29 family.

This is Large ribosomal subunit protein uL29 from Treponema denticola (strain ATCC 35405 / DSM 14222 / CIP 103919 / JCM 8153 / KCTC 15104).